We begin with the raw amino-acid sequence, 410 residues long: Elongation factor Tu, chloroplastic (410 aa).

The region spanning 10-214 is the tr-type G domain; that stretch reads KPHVNIGTIG…QVDAYIPTPE (205 aa). A G1 region spans residues 19 to 26; it reads GHVDHGKT. 19–26 serves as a coordination point for GTP; the sequence is GHVDHGKT. Threonine 26 is a binding site for Mg(2+). A G2 region spans residues 60–64; sequence GITIN. The segment at 81-84 is G3; the sequence is DCPG. GTP contacts are provided by residues 81–85 and 136–139; these read DCPGH and NKED. Positions 136-139 are G4; it reads NKED. Residues 174–176 are G5; the sequence is SAL.

This sequence belongs to the TRAFAC class translation factor GTPase superfamily. Classic translation factor GTPase family. EF-Tu/EF-1A subfamily.

Its subcellular location is the plastid. It localises to the chloroplast. The catalysed reaction is GTP + H2O = GDP + phosphate + H(+). Functionally, GTP hydrolase that promotes the GTP-dependent binding of aminoacyl-tRNA to the A-site of ribosomes during protein biosynthesis. The chain is Elongation factor Tu, chloroplastic (tufA) from Chlorokybus atmophyticus (Soil alga).